A 297-amino-acid polypeptide reads, in one-letter code: ATP phosphoribosyltransferase (297 aa).

Belongs to the ATP phosphoribosyltransferase family.

It is found in the cytoplasm. The catalysed reaction is 1-(5-phospho-beta-D-ribosyl)-ATP + diphosphate = 5-phospho-alpha-D-ribose 1-diphosphate + ATP. It functions in the pathway amino-acid biosynthesis; L-histidine biosynthesis; L-histidine from 5-phospho-alpha-D-ribose 1-diphosphate: step 1/9. Catalyzes the condensation of ATP and 5-phosphoribose 1-diphosphate to form N'-(5'-phosphoribosyl)-ATP (PR-ATP). Has a crucial role in the pathway because the rate of histidine biosynthesis seems to be controlled primarily by regulation of the enzymatic activity. The sequence is that of ATP phosphoribosyltransferase (HIS1) from Kluyveromyces lactis (strain ATCC 8585 / CBS 2359 / DSM 70799 / NBRC 1267 / NRRL Y-1140 / WM37) (Yeast).